We begin with the raw amino-acid sequence, 215 residues long: Probable transaldolase (215 aa).

K83 serves as the catalytic Schiff-base intermediate with substrate.

Belongs to the transaldolase family. Type 3B subfamily.

The protein localises to the cytoplasm. It carries out the reaction D-sedoheptulose 7-phosphate + D-glyceraldehyde 3-phosphate = D-erythrose 4-phosphate + beta-D-fructose 6-phosphate. The protein operates within carbohydrate degradation; pentose phosphate pathway; D-glyceraldehyde 3-phosphate and beta-D-fructose 6-phosphate from D-ribose 5-phosphate and D-xylulose 5-phosphate (non-oxidative stage): step 2/3. Functionally, transaldolase is important for the balance of metabolites in the pentose-phosphate pathway. The chain is Probable transaldolase from Streptococcus agalactiae serotype III (strain NEM316).